The chain runs to 522 residues: Na(+)/H(+) antiporter NhaB (522 aa).

Transmembrane regions (helical) follow at residues 25–45 (VFLVINPFIFWFHPFIAGWLL), 49–69 (FIFTLAMALKCYPLQPGGMLA), 87–107 (ILANFEVILLLMFMVAGIYFM), 128–162 (LSLAFCLTAAFLSAFLDALTVIAVIISVAMGFYGV), 201–221 (LMMHAAVGTALGGVMTLVGEP), 237–257 (FFFRMSPVTLLTLISGVVTCI), 302–322 (VFVGIWLIIGLAFHLASVGLI), 356–376 (LVVFFSVVAVIIDQHLFAPVI), 388–408 (LLLFYIFNGVLSAISDNVFVA), 446–466 (ATPNGQAAFLFLLTSSISPLI), and 476–496 (MALPYTIVLSIVGLLAVEYVL).

Belongs to the NhaB Na(+)/H(+) (TC 2.A.34) antiporter family.

It is found in the cell inner membrane. The catalysed reaction is 2 Na(+)(in) + 3 H(+)(out) = 2 Na(+)(out) + 3 H(+)(in). In terms of biological role, na(+)/H(+) antiporter that extrudes sodium in exchange for external protons. This Actinobacillus succinogenes (strain ATCC 55618 / DSM 22257 / CCUG 43843 / 130Z) protein is Na(+)/H(+) antiporter NhaB.